The primary structure comprises 332 residues: Pyrroline-5-carboxylate reductase (332 aa).

The protein belongs to the pyrroline-5-carboxylate reductase family.

The catalysed reaction is L-proline + NADP(+) = (S)-1-pyrroline-5-carboxylate + NADPH + 2 H(+). It carries out the reaction L-proline + NAD(+) = (S)-1-pyrroline-5-carboxylate + NADH + 2 H(+). Its pathway is amino-acid biosynthesis; L-proline biosynthesis; L-proline from L-glutamate 5-semialdehyde: step 1/1. The polypeptide is Pyrroline-5-carboxylate reductase (pro-1) (Neurospora crassa (strain ATCC 24698 / 74-OR23-1A / CBS 708.71 / DSM 1257 / FGSC 987)).